The following is a 345-amino-acid chain: Methionine import ATP-binding protein MetN (345 aa).

Residues 2 to 241 (IKLNNITKIF…PKTELAQEFI (240 aa)) enclose the ABC transporter domain. Residue 38-45 (GASGAGKS) participates in ATP binding.

This sequence belongs to the ABC transporter superfamily. Methionine importer (TC 3.A.1.24) family. In terms of assembly, the complex is composed of two ATP-binding proteins (MetN), two transmembrane proteins (MetI) and a solute-binding protein (MetQ).

The protein localises to the cell inner membrane. The catalysed reaction is L-methionine(out) + ATP + H2O = L-methionine(in) + ADP + phosphate + H(+). It catalyses the reaction D-methionine(out) + ATP + H2O = D-methionine(in) + ADP + phosphate + H(+). In terms of biological role, part of the ABC transporter complex MetNIQ involved in methionine import. Responsible for energy coupling to the transport system. The sequence is that of Methionine import ATP-binding protein MetN from Haemophilus influenzae (strain 86-028NP).